The primary structure comprises 291 residues: tRNA dimethylallyltransferase (291 aa).

11–18 (GPTASGKS) provides a ligand contact to ATP. Position 13-18 (13-18 (TASGKS)) interacts with substrate. An interaction with substrate tRNA region spans residues 42 to 45 (DSMQ).

The protein belongs to the IPP transferase family. In terms of assembly, monomer. Requires Mg(2+) as cofactor.

It catalyses the reaction adenosine(37) in tRNA + dimethylallyl diphosphate = N(6)-dimethylallyladenosine(37) in tRNA + diphosphate. Catalyzes the transfer of a dimethylallyl group onto the adenine at position 37 in tRNAs that read codons beginning with uridine, leading to the formation of N6-(dimethylallyl)adenosine (i(6)A). This is tRNA dimethylallyltransferase from Rubrobacter xylanophilus (strain DSM 9941 / JCM 11954 / NBRC 16129 / PRD-1).